A 367-amino-acid polypeptide reads, in one-letter code: Inner membrane amino-acid ABC transporter permease protein YhdY (367 aa).

Over 1–36 (MTKVLLSHPPRPASHNSSRAMVWVRKNLFSSWSNSL) the chain is Cytoplasmic. Residues 37 to 57 (LTIGCIWLMWELIPPLLNWAF) traverse the membrane as a helical segment. The Periplasmic portion of the chain corresponds to 58-99 (LQANWVGSTRADCTKAGACWVFIHERFGQFMYGLYPHDQRWR). A helical membrane pass occupies residues 100–120 (INLALLIGLVSIAPMFWKILP). At 121–125 (HRGRY) the chain is on the cytoplasmic side. The helical transmembrane segment at 126–146 (IAAWAVIYPLIVWWLMYGGFF) threads the bilayer. Over 147–162 (ALERVETRQWGGLTLT) the chain is Periplasmic. One can recognise an ABC transmembrane type-1 domain in the interval 159-353 (LTLTLIIASV…IFCFSMSRYS (195 aa)). Residues 163 to 183 (LIIASVGIAGALPWGILLALG) traverse the membrane as a helical segment. The Cytoplasmic segment spans residues 184 to 192 (RRSHMPIVR). A helical transmembrane segment spans residues 193 to 213 (ILSVIFIEFWRGVPLITVLFM). The Periplasmic segment spans residues 214-233 (SSVMLPLFMAEGTSIDKLIR). A helical membrane pass occupies residues 234 to 254 (ALVGVILFQSAYVAEVVRGGL). Topologically, residues 255–291 (QALPKGQYEAAESLALGYWKTQGLVILPQALKLVIPG) are cytoplasmic. Residues 292-312 (LVNTIIALFKDTSLVIIIGLF) form a helical membrane-spanning segment. The Periplasmic segment spans residues 313–326 (DLFSSVQQATVDPA). A helical transmembrane segment spans residues 327-347 (WLGMSTEGYVFAALIYWIFCF). At 348 to 367 (SMSRYSQYLEKRFNTGRTPH) the chain is on the cytoplasmic side.

The protein belongs to the binding-protein-dependent transport system permease family. HisMQ subfamily.

Its subcellular location is the cell inner membrane. In terms of biological role, probably part of the binding-protein-dependent transport system YdhWXYZ for an amino acid; probably responsible for the translocation of the substrate across the membrane. This is Inner membrane amino-acid ABC transporter permease protein YhdY (yhdY) from Escherichia coli (strain K12).